A 184-amino-acid chain; its full sequence is Flavodoxin FldP (184 aa).

Positions 4–176 constitute a Flavodoxin-like domain; that stretch reads AVVVYFSGYG…TVKLYAARVA (173 aa). Residues 10 to 14 and 91 to 147 each bind FMN; these read SGYGH and GFTN…SVGA.

It belongs to the FldP flavodoxin family. Requires FMN as cofactor.

Functionally, flavodoxins are low-potential electron donors to a number of redox enzymes. FldP protects the cell from oxidative stress and reactive oxygen species (ROS) damage, thereby expanding the capabilities of P.aeruginosa to thrive in hostile environments, and contributes to bacterial survival within the host. In vitro, is able to mediate ferredoxin-NADP(H) reductase (FNR)-driven cytochrome c reduction. In Pseudomonas aeruginosa (strain UCBPP-PA14), this protein is Flavodoxin FldP.